Consider the following 142-residue polypeptide: Large ribosomal subunit protein uL16 (142 aa).

A compositionally biased stretch (basic residues) spans Met1 to Arg14. The tract at residues Met1 to Thr22 is disordered.

The protein belongs to the universal ribosomal protein uL16 family. In terms of assembly, part of the 50S ribosomal subunit.

Binds 23S rRNA and is also seen to make contacts with the A and possibly P site tRNAs. The chain is Large ribosomal subunit protein uL16 from Synechococcus elongatus (strain ATCC 33912 / PCC 7942 / FACHB-805) (Anacystis nidulans R2).